The sequence spans 88 residues: Centromere protein W (88 aa).

The protein belongs to the CENP-W/WIP1 family. As to quaternary structure, heterodimer with CENPT; this dimer coassembles with CENPS-CENPX heterodimers at centromeres to form the tetrameric CENP-T-W-S-X complex, which is a subcomplex of the large constitutive centromere-associated network (CCAN, also known as the interphase centromere complex or ICEN). Interacts with NPM1. As to expression, highly expressed in ovary, liver, lung and pancreas and to a lower extent in breast and gastrointestinal tract cancers; such as those of the colon, rectum and stomach. Overexpressed in high grade breast invasive tumors. Expressed in many cancer cell types.

It localises to the nucleus. Its subcellular location is the chromosome. The protein resides in the centromere. The protein localises to the kinetochore. It is found in the nucleus matrix. It localises to the nucleolus. Functionally, component of the CENPA-NAC (nucleosome-associated) complex, a complex that plays a central role in assembly of kinetochore proteins, mitotic progression and chromosome segregation. The CENPA-NAC complex recruits the CENPA-CAD (nucleosome distal) complex and may be involved in incorporation of newly synthesized CENPA into centromeres. Part of a nucleosome-associated complex that binds specifically to histone H3-containing nucleosomes at the centromere, as opposed to nucleosomes containing CENPA. Component of the heterotetrameric CENP-T-W-S-X complex that binds and supercoils DNA, and plays an important role in kinetochore assembly. CENPW has a fundamental role in kinetochore assembly and function. It is one of the inner kinetochore proteins, with most further proteins binding downstream. Required for normal chromosome organization and normal progress through mitosis. The polypeptide is Centromere protein W (CENPW) (Homo sapiens (Human)).